Reading from the N-terminus, the 409-residue chain is Argininosuccinate synthase (409 aa).

ATP contacts are provided by residues Ala10 to Ser18 and Ala37. Residues Tyr90 and Ser95 each contribute to the L-citrulline site. Gly120 is a binding site for ATP. L-aspartate-binding residues include Thr122, Asn126, and Asp127. Asn126 is an L-citrulline binding site. The L-citrulline site is built by Arg130, Ser182, Ser191, Glu267, and Tyr279.

This sequence belongs to the argininosuccinate synthase family. Type 1 subfamily. As to quaternary structure, homotetramer.

It localises to the cytoplasm. The catalysed reaction is L-citrulline + L-aspartate + ATP = 2-(N(omega)-L-arginino)succinate + AMP + diphosphate + H(+). It participates in amino-acid biosynthesis; L-arginine biosynthesis; L-arginine from L-ornithine and carbamoyl phosphate: step 2/3. The sequence is that of Argininosuccinate synthase from Thiobacillus denitrificans (strain ATCC 25259 / T1).